Here is a 746-residue protein sequence, read N- to C-terminus: Root phototropism protein 3 (746 aa).

Residues 1–24 are disordered; that stretch reads MMWESESDGGVGVGGGGGREYGDG. Residues 9–19 are compositionally biased toward gly residues; sequence GGVGVGGGGGR. Residues 54-122 enclose the BTB domain; that stretch reads SDLLVKIGDM…CYGVPVDLTA (69 aa). The region spanning 250-605 is the NPH3 domain; sequence DWWFEDVSIL…VQVLFSEQVK (356 aa). A disordered region spans residues 461 to 500; the sequence is EQTEGSSPSRMSPSPSQSMYADIPRGNNNNGGGGGGNNQN. Residues 466 to 478 show a composition bias toward low complexity; the sequence is SSPSRMSPSPSQS. Y546 carries the post-translational modification Phosphotyrosine. The interval 708-746 is disordered; that stretch reads SKLTKMSGQESHDISSGGEQAGVDHPPPRKPRRWRNSIS. The segment covering 735–746 has biased composition (basic residues); that stretch reads PRKPRRWRNSIS.

The protein belongs to the NPH3 family. Interacts with PKS1, PKS2, RPT2, PHOT1 and PHOT2. Subunit of a complex made of CAR6, PHOT1 and RPT3/NPH3. Phosphorylated in the dark. As to expression, expressed in hypocotyls, guard cells and mesophyll cells.

It is found in the cell membrane. The protein operates within protein modification; protein ubiquitination. Functionally, may act as a substrate-specific adapter of an E3 ubiquitin-protein ligase complex (CUL3-RBX1-BTB) which mediates the ubiquitination and subsequent proteasomal degradation of target proteins. Signal transducer of the phototropic response and photo-induced movements. Involved in the phot1 pathway under low blue light (LBL) fluence rate and in the phot2 pathway under higher fluence rate of blue light (HBL). Necessary for root and hypocotyl phototropisms, but not for the regulation of stomata opening. Not involved in chloroplast accumulation and translocation. This is Root phototropism protein 3 (RPT3) from Arabidopsis thaliana (Mouse-ear cress).